The sequence spans 151 residues: FUN14 domain-containing protein 1 (151 aa).

The YXXL motif lies at 14–17; sequence YEVL. A run of 3 helical transmembrane segments spans residues 44–64, 71–91, and 130–150; these read YSVA…GFLF, AATA…GGYI, and FIKK…LGLA.

Belongs to the FUN14 family.

Its subcellular location is the mitochondrion outer membrane. Its function is as follows. Acts as an activator of hypoxia-induced mitophagy, an important mechanism for mitochondrial quality control. The sequence is that of FUN14 domain-containing protein 1 (fundc1) from Xenopus tropicalis (Western clawed frog).